Consider the following 71-residue polypeptide: MGRKKESFENMLEKLETIVDSMDNGEITLEDSMKSYEEGIKLCNKLYKVLKDAEGKIKILEDNKEEDFESS.

It belongs to the XseB family. As to quaternary structure, heterooligomer composed of large and small subunits.

It localises to the cytoplasm. The catalysed reaction is Exonucleolytic cleavage in either 5'- to 3'- or 3'- to 5'-direction to yield nucleoside 5'-phosphates.. Functionally, bidirectionally degrades single-stranded DNA into large acid-insoluble oligonucleotides, which are then degraded further into small acid-soluble oligonucleotides. The protein is Exodeoxyribonuclease 7 small subunit of Clostridium botulinum (strain Kyoto / Type A2).